The chain runs to 325 residues: 5-dehydro-2-deoxygluconokinase (325 aa).

The protein belongs to the carbohydrate kinase PfkB family.

The catalysed reaction is 5-dehydro-2-deoxy-D-gluconate + ATP = 6-phospho-5-dehydro-2-deoxy-D-gluconate + ADP + H(+). It functions in the pathway polyol metabolism; myo-inositol degradation into acetyl-CoA; acetyl-CoA from myo-inositol: step 5/7. In terms of biological role, catalyzes the phosphorylation of 5-dehydro-2-deoxy-D-gluconate (2-deoxy-5-keto-D-gluconate or DKG) to 6-phospho-5-dehydro-2-deoxy-D-gluconate (DKGP). In Listeria innocua serovar 6a (strain ATCC BAA-680 / CLIP 11262), this protein is 5-dehydro-2-deoxygluconokinase.